A 281-amino-acid polypeptide reads, in one-letter code: Small ribosomal subunit protein uS2 (281 aa).

It belongs to the universal ribosomal protein uS2 family.

The sequence is that of Small ribosomal subunit protein uS2 (rpsB) from Chlamydia muridarum (strain MoPn / Nigg).